The primary structure comprises 149 residues: Transcriptional regulator MraZ (149 aa).

2 SpoVT-AbrB domains span residues 7-54 and 83-126; these read KYVN…GISH and AVQL…QPQN.

It belongs to the MraZ family. In terms of assembly, forms oligomers.

Its subcellular location is the cytoplasm. It localises to the nucleoid. This chain is Transcriptional regulator MraZ, found in Rickettsia akari (strain Hartford).